Consider the following 193-residue polypeptide: V-type ATP synthase subunit E (193 aa).

The protein belongs to the V-ATPase E subunit family.

In terms of biological role, produces ATP from ADP in the presence of a proton gradient across the membrane. The sequence is that of V-type ATP synthase subunit E from Anaeromyxobacter sp. (strain Fw109-5).